A 362-amino-acid polypeptide reads, in one-letter code: CLIP domain-containing serine protease B10 (362 aa).

A signal peptide spans 1–19; that stretch reads MAKVVDCVLLLAFIAVVRG. The Clip domain occupies 22-75; that stretch reads ACRTPDHRDGVCHPVQQCPSVRDEFFNSDRVLSEDEIDYLRKLQCKTKDVTICC. Disulfide bonds link cysteine 23–cysteine 74, cysteine 33–cysteine 66, and cysteine 39–cysteine 75. Residues 110–361 form the Peptidase S1 domain; sequence IIGGNYTAID…YLDWIRQNIR (252 aa). Residue asparagine 114 is glycosylated (N-linked (GlcNAc...) asparagine). A disulfide bridge connects residues cysteine 140 and cysteine 156. Active-site charge relay system residues include histidine 155 and aspartate 220. Asparagine 254 carries an N-linked (GlcNAc...) asparagine glycan. Disulfide bonds link cysteine 285–cysteine 300 and cysteine 310–cysteine 337. The active-site Charge relay system is the serine 314.

It belongs to the peptidase S1 family. CLIP subfamily. In terms of assembly, forms a covalent heterodimer with SRPN2; the interaction inhibits CLIPB10 catalytic activity. Post-translationally, cleaved by an unknown protease into an active form.

The protein resides in the secreted. With respect to regulation, inhibited by serpin SRPN2. Serine protease which preferentially cleaves after arginine residues. Involved in the innate immune response against parasite P.bergei infection by activating the melanization cascade. Probably in the hemolymph, cleaves and activates prophenoloxidase (PPO), which functions in the formation of pigments such as melanin and other polyphenolic compounds. In the susceptible strain G3, appears to be dispensable for ookinete elimination which occurs by lysis. In Anopheles gambiae (African malaria mosquito), this protein is CLIP domain-containing serine protease B10.